The following is a 397-amino-acid chain: Elongation factor Tu (397 aa).

Residues lysine 10–glutamate 206 enclose the tr-type G domain. The segment at glycine 19–threonine 26 is G1. Glycine 19–threonine 26 provides a ligand contact to GTP. Threonine 26 lines the Mg(2+) pocket. The segment at glycine 62–serine 66 is G2. The tract at residues aspartate 83–glycine 86 is G3. GTP contacts are provided by residues aspartate 83–histidine 87 and asparagine 138–aspartate 141. The G4 stretch occupies residues asparagine 138–aspartate 141. The interval serine 176–leucine 178 is G5.

The protein belongs to the TRAFAC class translation factor GTPase superfamily. Classic translation factor GTPase family. EF-Tu/EF-1A subfamily. As to quaternary structure, monomer.

The protein localises to the cytoplasm. The enzyme catalyses GTP + H2O = GDP + phosphate + H(+). Its function is as follows. GTP hydrolase that promotes the GTP-dependent binding of aminoacyl-tRNA to the A-site of ribosomes during protein biosynthesis. The polypeptide is Elongation factor Tu (Streptomyces cinnamoneus (Streptoverticillium cinnamoneum)).